Here is a 529-residue protein sequence, read N- to C-terminus: Bifunctional purine biosynthesis protein PurH (529 aa).

Residues 1 to 148 (MQQRRPVRRA…KNHKDVAIVV (148 aa)) enclose the MGS-like domain. Lys287 carries the post-translational modification N6-acetyllysine.

It belongs to the PurH family.

The catalysed reaction is (6R)-10-formyltetrahydrofolate + 5-amino-1-(5-phospho-beta-D-ribosyl)imidazole-4-carboxamide = 5-formamido-1-(5-phospho-D-ribosyl)imidazole-4-carboxamide + (6S)-5,6,7,8-tetrahydrofolate. It carries out the reaction IMP + H2O = 5-formamido-1-(5-phospho-D-ribosyl)imidazole-4-carboxamide. Its pathway is purine metabolism; IMP biosynthesis via de novo pathway; 5-formamido-1-(5-phospho-D-ribosyl)imidazole-4-carboxamide from 5-amino-1-(5-phospho-D-ribosyl)imidazole-4-carboxamide (10-formyl THF route): step 1/1. The protein operates within purine metabolism; IMP biosynthesis via de novo pathway; IMP from 5-formamido-1-(5-phospho-D-ribosyl)imidazole-4-carboxamide: step 1/1. The chain is Bifunctional purine biosynthesis protein PurH from Escherichia coli O17:K52:H18 (strain UMN026 / ExPEC).